The chain runs to 211 residues: Arginine exporter protein ArgO (211 aa).

The next 6 helical transmembrane spans lie at 1–21 (MISY…PLGP), 37–57 (LMIA…GIFG), 68–88 (LLAL…FGAL), 111–131 (IIAT…DTFV), 147–167 (WFAL…ALLA), and 179–199 (AQRI…FQLA).

It belongs to the LysE/ArgO transporter (TC 2.A.75) family.

It is found in the cell inner membrane. The enzyme catalyses L-arginine(in) = L-arginine(out). In terms of biological role, involved in the export of arginine. Important to control the intracellular level of arginine and the correct balance between arginine and lysine. The sequence is that of Arginine exporter protein ArgO from Salmonella paratyphi C (strain RKS4594).